Consider the following 304-residue polypeptide: Small glutamine-rich tetratricopeptide repeat-containing protein beta (304 aa).

4 TPR repeats span residues 15–49 (LREQSQMDAYTSDEQESLEVAIQCLETVFKISPED), 85–118 (ADQLKDEGNNHMKEENYAAAVDCYTQAIELDPNN), 120–152 (VYYCNRAAAQSKLSHYTDAIKDCEKAIAIDSKY), and 153–186 (SKAYGRMGLALTAMNKFEEAVTSYQKALDLDPEN). The residue at position 131 (Lys-131) is an N6-acetyllysine. Phosphoserine is present on residues Ser-293, Ser-295, and Ser-297.

Belongs to the SGT family. In terms of assembly, homooligomerize.

Its function is as follows. Co-chaperone that binds directly to HSC70 and HSP70 and regulates their ATPase activity. In Mus musculus (Mouse), this protein is Small glutamine-rich tetratricopeptide repeat-containing protein beta (Sgtb).